Consider the following 229-residue polypeptide: Aldehyde oxidoreductase iron-sulfur-binding subunit PaoA (229 aa).

The segment at 1-21 (MSNQGEYPEDNRVGKHEPHDL) is disordered. The segment at residues 1-53 (MSNQGEYPEDNRVGKHEPHDLSLTRRDLIKVSAATAAAAVVYPHSTLAASVPA) is a signal peptide (tat-type signal). Positions 9–21 (EDNRVGKHEPHDL) are enriched in basic and acidic residues. Residues 61–137 (MPLTLKVNGK…GAEITTIEGL (77 aa)) form the 2Fe-2S ferredoxin-type domain. Positions 99, 104, 105, 107, 119, 158, 161, 208, and 210 each coordinate [2Fe-2S] cluster.

In terms of assembly, heterotrimer composed of PaoA, PaoB and PaoC. [2Fe-2S] cluster is required as a cofactor. Exported by the Tat system. The position of the signal peptide cleavage has not been experimentally proven.

The protein resides in the periplasm. The catalysed reaction is an aldehyde + A + H2O = a carboxylate + AH2 + H(+). Oxidizes aldehydes to the corresponding carboxylic acids with a preference for aromatic aldehydes. It might play a role in the detoxification of aldehydes to avoid cell damage. The protein is Aldehyde oxidoreductase iron-sulfur-binding subunit PaoA of Escherichia coli O157:H7.